Consider the following 227-residue polypeptide: NADH-quinone oxidoreductase subunit C (227 aa).

The protein belongs to the complex I 30 kDa subunit family. In terms of assembly, NDH-1 is composed of 14 different subunits. Subunits NuoB, C, D, E, F, and G constitute the peripheral sector of the complex.

The protein localises to the cell inner membrane. It catalyses the reaction a quinone + NADH + 5 H(+)(in) = a quinol + NAD(+) + 4 H(+)(out). In terms of biological role, NDH-1 shuttles electrons from NADH, via FMN and iron-sulfur (Fe-S) centers, to quinones in the respiratory chain. The immediate electron acceptor for the enzyme in this species is believed to be ubiquinone. Couples the redox reaction to proton translocation (for every two electrons transferred, four hydrogen ions are translocated across the cytoplasmic membrane), and thus conserves the redox energy in a proton gradient. This Legionella pneumophila (strain Paris) protein is NADH-quinone oxidoreductase subunit C.